Here is a 551-residue protein sequence, read N- to C-terminus: MAENWKNCFEEELICPICLHVFVEPVQLPCKHNFCRGCIGEAWAKDSGLVRCPECNQAYNQKPGLEKNLKLTNIVEKFNALHVEKPPTALHCVFCRRGPPLPAQKVCLRCEAPCCQSHVQTHLQQPSTARGHLLVEADDVRAWSCPQHNAYRLYHCEAEQVAVCQYCCYYSGAHQGHSVCDVEIRRNEIRKMLMKQQERLEEREQDIEDQLYKLESDKRLVEEKVSQLKEEVRLQYEKLHQLLDEDLRQTVEVLDKAQAKFCSENAAQALHLGERMQEAKKLLGSLQRLFDKTEDVGFMKNTKSVKILMDRTQTCTGSSLSPPKIGHLNSKLFLNEVAKKEKQLRKMLEGPFSTPVPFLQSVPLYPCGVNSSGAEKRKHSTAFPEASFLETSSGPVGGQYGAAGTASSEGQSGQPLGPCSSTQHLVALPGGTQPVHSSPVFPPSQYPNGSTTQQPMLPQYGGRKILVCSVDNCYCSSVANHGGHQPYPRSGHFPWTVPSQEYSHPLPPTPSVPQSLPGLAVRDWLDASQQPGHQDFYRVYGQPSTKHYVTS.

The RING-type zinc finger occupies 15 to 56 (CPICLHVFVEPVQLPCKHNFCRGCIGEAWAKDSGLVRCPECN). 2 consecutive B box-type zinc fingers follow at residues 92–132 (CVFC…ARGH) and 140–182 (VRAW…VCDV). Coiled coils occupy residues 181–249 (DVEI…DLRQ) and 274–295 (ERMQ…KTED). A disordered region spans residues 399 to 457 (QYGAAGTASSEGQSGQPLGPCSSTQHLVALPGGTQPVHSSPVFPPSQYPNGSTTQQPML). Composition is skewed to polar residues over residues 405 to 424 (TASS…STQH) and 446 to 456 (YPNGSTTQQPM).

It belongs to the TRIM/RBCC family. In terms of assembly, homodimer. Interacts with SOCS1 (via) SH2 domain and SOCS box. Interacts with HSP90AB1; prevents nucleus translocation of phosphorylated STAT3 and HSP90AB1. Interacts with MAP3K7/TAK1. Interacts with PIAS3. Interacts with TICAM1. Interacts with TRIM15; this interaction prevents TRIM8 cytoplasmic translocation. In terms of tissue distribution, high expression in heart, liver, and thymus. Expressed in embryonic CNS, kidney, lens and gut.

The enzyme catalyses S-ubiquitinyl-[E2 ubiquitin-conjugating enzyme]-L-cysteine + [acceptor protein]-L-lysine = [E2 ubiquitin-conjugating enzyme]-L-cysteine + N(6)-ubiquitinyl-[acceptor protein]-L-lysine.. The protein operates within protein modification; protein ubiquitination. E3 ubiquitin-protein ligase that participates in multiple biological processes including cell survival, differentiation, apoptosis, and in particular, the innate immune response. Participates in the activation of interferon-gamma signaling by promoting proteasomal degradation of the repressor SOCS1. Plays a positive role in the TNFalpha and IL-1beta signaling pathways. Mechanistically, induces the 'Lys-63'-linked polyubiquitination of MAP3K7/TAK1 component leading to the activation of NF-kappa-B. Also modulates STAT3 activity through negative regulation of PIAS3, either by degradation of PIAS3 through the ubiquitin-proteasome pathway or exclusion of PIAS3 from the nucleus. Negatively regulates TLR3/4-mediated innate immune response by catalyzing 'Lys-6'- and 'Lys-33'-linked polyubiquitination of TICAM1 and thereby disrupting the TICAM1-TBK1 interaction. The polypeptide is E3 ubiquitin-protein ligase TRIM8 (Trim8) (Mus musculus (Mouse)).